The chain runs to 138 residues: UPF0310 protein MAV_1800 (138 aa).

The protein belongs to the UPF0310 family.

The polypeptide is UPF0310 protein MAV_1800 (Mycobacterium avium (strain 104)).